Reading from the N-terminus, the 557-residue chain is Urocanate hydratase (557 aa).

Residues glycine 53–glycine 54, glutamine 131, glycine 177–glycine 179, glutamate 197, arginine 202, asparagine 243–alanine 244, glutamine 264–histidine 268, tyrosine 274–leucine 275, and tyrosine 323 contribute to the NAD(+) site. Cysteine 411 is an active-site residue. An NAD(+)-binding site is contributed by glycine 493.

The protein belongs to the urocanase family. NAD(+) serves as cofactor.

The protein localises to the cytoplasm. It catalyses the reaction 4-imidazolone-5-propanoate = trans-urocanate + H2O. Its pathway is amino-acid degradation; L-histidine degradation into L-glutamate; N-formimidoyl-L-glutamate from L-histidine: step 2/3. Catalyzes the conversion of urocanate to 4-imidazolone-5-propionate. The sequence is that of Urocanate hydratase from Pseudomonas putida (strain GB-1).